A 345-amino-acid polypeptide reads, in one-letter code: N-acetyl-gamma-glutamyl-phosphate reductase (345 aa).

Residue Cys-149 is part of the active site.

It belongs to the NAGSA dehydrogenase family. Type 1 subfamily.

Its subcellular location is the cytoplasm. The catalysed reaction is N-acetyl-L-glutamate 5-semialdehyde + phosphate + NADP(+) = N-acetyl-L-glutamyl 5-phosphate + NADPH + H(+). It functions in the pathway amino-acid biosynthesis; L-arginine biosynthesis; N(2)-acetyl-L-ornithine from L-glutamate: step 3/4. Its function is as follows. Catalyzes the NADPH-dependent reduction of N-acetyl-5-glutamyl phosphate to yield N-acetyl-L-glutamate 5-semialdehyde. The sequence is that of N-acetyl-gamma-glutamyl-phosphate reductase from Bacillus mycoides (strain KBAB4) (Bacillus weihenstephanensis).